The following is an 83-amino-acid chain: Neurotoxin LmNaTx3 (83 aa).

The first 21 residues, 1–21, serve as a signal peptide directing secretion; it reads MQLKIQLLMLVLMIVLTDVYS. The LCN-type CS-alpha/beta domain maps to 22-83; sequence KDGFIVSKKN…NIAMKNKNYC (62 aa). Intrachain disulfides connect Cys-32–Cys-83, Cys-36–Cys-59, Cys-45–Cys-64, and Cys-49–Cys-66.

The protein belongs to the long (4 C-C) scorpion toxin superfamily. Sodium channel inhibitor family. Alpha subfamily. As to expression, expressed by the venom gland.

The protein resides in the secreted. Binds voltage-independently at site-3 of voltage-gated sodium channels (Nav) and inhibits the inactivation of the activated channels, thereby blocking neuronal transmission. This Lychas mucronatus (Chinese swimming scorpion) protein is Neurotoxin LmNaTx3.